A 273-amino-acid polypeptide reads, in one-letter code: Large ribosomal subunit protein uL2 (273 aa).

Positions 223 to 273 (VVMNPVDHPMGGGEGRSSGGRHPCTPWGVPTKGHKTRSNKSTDKYIVKRRG) are disordered. A compositionally biased stretch (basic and acidic residues) spans 262-273 (KSTDKYIVKRRG).

Belongs to the universal ribosomal protein uL2 family. Part of the 50S ribosomal subunit. Forms a bridge to the 30S subunit in the 70S ribosome.

Its function is as follows. One of the primary rRNA binding proteins. Required for association of the 30S and 50S subunits to form the 70S ribosome, for tRNA binding and peptide bond formation. It has been suggested to have peptidyltransferase activity; this is somewhat controversial. Makes several contacts with the 16S rRNA in the 70S ribosome. This is Large ribosomal subunit protein uL2 from Syntrophus aciditrophicus (strain SB).